The chain runs to 228 residues: GrpE protein homolog, mitochondrial (228 aa).

Basic and acidic residues predominate over residues 46–57; it reads DEAKSEESKENN. Residues 46–66 are disordered; the sequence is DEAKSEESKENNEDLTEEQSE.

Belongs to the GrpE family. Component of the PAM complex, at least composed of SSC1 (mtHsp70), MGE1, TIM44, PAM16/TIM16, PAM17 and PAM18/TIM14. Interacts with SSQ1. In terms of processing, the N-terminus is blocked.

Its subcellular location is the mitochondrion matrix. Functionally, essential component of the PAM complex, a complex required for the translocation of transit peptide-containing proteins from the inner membrane into the mitochondrial matrix in an ATP-dependent manner. Seems to control the nucleotide-dependent binding of SSC1 to substrate proteins and the association of SSC1 with TIM44. This chain is GrpE protein homolog, mitochondrial (MGE1), found in Saccharomyces cerevisiae (strain ATCC 204508 / S288c) (Baker's yeast).